We begin with the raw amino-acid sequence, 284 residues long: Steroidogenic acute regulatory protein, mitochondrial (284 aa).

The N-terminal 62 residues, 1-62 (MLLATFKLCA…RRSSLLGSQL (62 aa)), are a transit peptide targeting the mitochondrion. 2 positions are modified to phosphoserine; by PKA: Ser-56 and Ser-194. Residues 66–279 (LYSDQELSYI…LRKRLESSPA (214 aa)) enclose the START domain.

In terms of assembly, may interact with TSPO.

It is found in the mitochondrion. It catalyses the reaction cholesterol(in) = cholesterol(out). It participates in steroid metabolism; cholesterol metabolism. Plays a key role in steroid hormone synthesis by enhancing the metabolism of cholesterol into pregnenolone. Mediates the transfer of cholesterol from the outer mitochondrial membrane to the inner mitochondrial membrane where it is cleaved to pregnenolone. This is Steroidogenic acute regulatory protein, mitochondrial (Star) from Rattus norvegicus (Rat).